The sequence spans 138 residues: Cysteine desulfuration protein SufE (138 aa).

Cys51 serves as the catalytic Cysteine persulfide intermediate.

It belongs to the SufE family. As to quaternary structure, homodimer. Interacts with SufS.

It is found in the cytoplasm. It functions in the pathway cofactor biosynthesis; iron-sulfur cluster biosynthesis. Functionally, participates in cysteine desulfuration mediated by SufS. Cysteine desulfuration mobilizes sulfur from L-cysteine to yield L-alanine and constitutes an essential step in sulfur metabolism for biosynthesis of a variety of sulfur-containing biomolecules. Functions as a sulfur acceptor for SufS, by mediating the direct transfer of the sulfur atom from the S-sulfanylcysteine of SufS, an intermediate product of cysteine desulfuration process. This chain is Cysteine desulfuration protein SufE, found in Photorhabdus laumondii subsp. laumondii (strain DSM 15139 / CIP 105565 / TT01) (Photorhabdus luminescens subsp. laumondii).